Here is a 153-residue protein sequence, read N- to C-terminus: Superoxide dismutase [Cu-Zn] (153 aa).

Cu cation-binding residues include His45, His47, and His62. An intrachain disulfide couples Cys56 to Cys145. 4 residues coordinate Zn(2+): His62, His70, His79, and Asp82. His119 contributes to the Cu cation binding site.

It belongs to the Cu-Zn superoxide dismutase family. In terms of assembly, homodimer. Cu cation is required as a cofactor. Requires Zn(2+) as cofactor.

It localises to the cytoplasm. The enzyme catalyses 2 superoxide + 2 H(+) = H2O2 + O2. Functionally, destroys radicals which are normally produced within the cells and which are toxic to biological systems. This is Superoxide dismutase [Cu-Zn] from Ceratitis capitata (Mediterranean fruit fly).